Reading from the N-terminus, the 319-residue chain is Lambda-crystallin homolog (319 aa).

At Ala-2 the chain carries N-acetylalanine. A Phosphoserine modification is found at Ser-3. NAD(+)-binding positions include 16–17 (VI), Asp-36, Glu-97, and Lys-102. Ser-111 bears the Phosphoserine mark.

The protein belongs to the 3-hydroxyacyl-CoA dehydrogenase family. Homodimer. Widely expressed, with highest levels in liver and kidney.

The protein localises to the cytoplasm. The enzyme catalyses L-gulonate + NAD(+) = 3-dehydro-L-gulonate + NADH + H(+). Inhibited by malonate. Has high L-gulonate 3-dehydrogenase activity. It also exhibits low dehydrogenase activity toward L-3-hydroxybutyrate (HBA) and L-threonate. In Homo sapiens (Human), this protein is Lambda-crystallin homolog (CRYL1).